The sequence spans 462 residues: Bifunctional protein GlmU (462 aa).

A pyrophosphorylase region spans residues 1–230 (MVNKNAIILA…FEESMGVNDR (230 aa)). UDP-N-acetyl-alpha-D-glucosamine contacts are provided by residues 9–12 (LAAG), Lys-23, Gln-73, 78–79 (GT), 101–103 (SGD), Gly-140, Glu-155, Asn-170, and Asn-228. Asp-103 is a Mg(2+) binding site. Mg(2+) is bound at residue Asn-228. The interval 231–251 (VALSQATKVMRQRINTAHMRN) is linker. An N-acetyltransferase region spans residues 252 to 462 (GVTLIDPEST…LPVAKDEEWQ (211 aa)). Residues Arg-333 and Lys-351 each contribute to the UDP-N-acetyl-alpha-D-glucosamine site. His-363 serves as the catalytic Proton acceptor. UDP-N-acetyl-alpha-D-glucosamine contacts are provided by Tyr-366 and Asn-377. Acetyl-CoA is bound by residues 386 to 387 (NY), Ser-405, Ala-423, and Arg-440.

It in the N-terminal section; belongs to the N-acetylglucosamine-1-phosphate uridyltransferase family. The protein in the C-terminal section; belongs to the transferase hexapeptide repeat family. As to quaternary structure, homotrimer. It depends on Mg(2+) as a cofactor.

The protein localises to the cytoplasm. It carries out the reaction alpha-D-glucosamine 1-phosphate + acetyl-CoA = N-acetyl-alpha-D-glucosamine 1-phosphate + CoA + H(+). It catalyses the reaction N-acetyl-alpha-D-glucosamine 1-phosphate + UTP + H(+) = UDP-N-acetyl-alpha-D-glucosamine + diphosphate. The protein operates within nucleotide-sugar biosynthesis; UDP-N-acetyl-alpha-D-glucosamine biosynthesis; N-acetyl-alpha-D-glucosamine 1-phosphate from alpha-D-glucosamine 6-phosphate (route II): step 2/2. It participates in nucleotide-sugar biosynthesis; UDP-N-acetyl-alpha-D-glucosamine biosynthesis; UDP-N-acetyl-alpha-D-glucosamine from N-acetyl-alpha-D-glucosamine 1-phosphate: step 1/1. Its pathway is bacterial outer membrane biogenesis; LPS lipid A biosynthesis. In terms of biological role, catalyzes the last two sequential reactions in the de novo biosynthetic pathway for UDP-N-acetylglucosamine (UDP-GlcNAc). The C-terminal domain catalyzes the transfer of acetyl group from acetyl coenzyme A to glucosamine-1-phosphate (GlcN-1-P) to produce N-acetylglucosamine-1-phosphate (GlcNAc-1-P), which is converted into UDP-GlcNAc by the transfer of uridine 5-monophosphate (from uridine 5-triphosphate), a reaction catalyzed by the N-terminal domain. This Latilactobacillus sakei subsp. sakei (strain 23K) (Lactobacillus sakei subsp. sakei) protein is Bifunctional protein GlmU.